Here is a 247-residue protein sequence, read N- to C-terminus: ATP synthase subunit a, chloroplastic (247 aa).

5 consecutive transmembrane segments (helical) span residues 38–58 (QVLITSWVVIAILLGSATIAV), 95–115 (VPFIGTMFLFIFVSNWSGALL), 134–154 (INTTVALALLTSVAYFYAGLT), 199–219 (LVVVVLVSLVPLVVPIPVMLL), and 220–240 (GLFTSGIQALIFATLAAAYIG).

This sequence belongs to the ATPase A chain family. As to quaternary structure, F-type ATPases have 2 components, CF(1) - the catalytic core - and CF(0) - the membrane proton channel. CF(1) has five subunits: alpha(3), beta(3), gamma(1), delta(1), epsilon(1). CF(0) has four main subunits: a, b, b' and c.

Its subcellular location is the plastid. The protein localises to the chloroplast thylakoid membrane. Functionally, key component of the proton channel; it plays a direct role in the translocation of protons across the membrane. This is ATP synthase subunit a, chloroplastic from Solanum lycopersicum (Tomato).